Consider the following 233-residue polypeptide: Probable transglycosylase IsaA (233 aa).

Residues 1-29 (MKKTIMASSLAVALGVTGYAAGTGHQAHA) form the signal peptide.

It belongs to the transglycosylase family. IsaA subfamily.

The protein resides in the secreted. In terms of biological role, is able to cleave peptidoglycan. The sequence is that of Probable transglycosylase IsaA (isaA) from Staphylococcus aureus (strain USA300).